A 463-amino-acid chain; its full sequence is uncharacterized protein (463 aa).

Residues 1-93 enclose the PE domain; it reads MSYMIAVPDM…AGAYASAEAT (93 aa). Disordered stretches follow at residues 231-320 and 408-463; these read GGAG…AGNG and NGGD…TPGQ. Positions 408-451 are enriched in gly residues; sequence NGGDGGKGGDAQLIGNGGNGGNGGKGGTGLMPGINGTGGAGGSR.

It belongs to the mycobacterial PE family. PGRS subfamily.

This is an uncharacterized protein from Mycobacterium tuberculosis (strain ATCC 25618 / H37Rv).